A 479-amino-acid chain; its full sequence is Ribosomal RNA small subunit methyltransferase F (479 aa).

S-adenosyl-L-methionine is bound by residues 125-131 (AAAPGSK), glutamate 149, aspartate 176, and aspartate 194. Cysteine 247 functions as the Nucleophile in the catalytic mechanism.

The protein belongs to the class I-like SAM-binding methyltransferase superfamily. RsmB/NOP family.

The protein resides in the cytoplasm. The catalysed reaction is cytidine(1407) in 16S rRNA + S-adenosyl-L-methionine = 5-methylcytidine(1407) in 16S rRNA + S-adenosyl-L-homocysteine + H(+). Its function is as follows. Specifically methylates the cytosine at position 1407 (m5C1407) of 16S rRNA. The chain is Ribosomal RNA small subunit methyltransferase F from Escherichia coli O139:H28 (strain E24377A / ETEC).